Reading from the N-terminus, the 443-residue chain is Probable D-serine dehydratase (443 aa).

Lysine 116 carries the N6-(pyridoxal phosphate)lysine modification.

It belongs to the serine/threonine dehydratase family. DsdA subfamily. Requires pyridoxal 5'-phosphate as cofactor.

It carries out the reaction D-serine = pyruvate + NH4(+). This is Probable D-serine dehydratase from Bacillus cereus (strain B4264).